We begin with the raw amino-acid sequence, 51 residues long: MQQLQNVIESAFERRADITPANVDTVTREAVNQVISLLDSGALRVAKKIDG.

Belongs to the transferase hexapeptide repeat family. Homotrimer.

The protein resides in the cytoplasm. The enzyme catalyses (S)-2,3,4,5-tetrahydrodipicolinate + succinyl-CoA + H2O = (S)-2-succinylamino-6-oxoheptanedioate + CoA. It functions in the pathway amino-acid biosynthesis; L-lysine biosynthesis via DAP pathway; LL-2,6-diaminopimelate from (S)-tetrahydrodipicolinate (succinylase route): step 1/3. In Klebsiella oxytoca, this protein is 2,3,4,5-tetrahydropyridine-2,6-dicarboxylate N-succinyltransferase (dapD).